The following is a 286-amino-acid chain: 4-hydroxybenzoate octaprenyltransferase (286 aa).

7 helical membrane passes run 21-40 (GTLLLLWPCLMALMLAAGGM), 95-115 (ILFVILGLSAFGLVLLLNGLV), 142-162 (FLGIVWSWSIPMAYAAQTGEV), 167-187 (WWLFAANWCWTVAYDTMYAMV), 210-230 (QIIGLFQLAALACFIAAGWSA), 235-255 (LYGLGILTFVGFSTYQQMLIF), and 266-286 (FLNNNWAGLALFVGLGADYLI).

It belongs to the UbiA prenyltransferase family. Mg(2+) is required as a cofactor.

Its subcellular location is the cell inner membrane. It catalyses the reaction all-trans-octaprenyl diphosphate + 4-hydroxybenzoate = 4-hydroxy-3-(all-trans-octaprenyl)benzoate + diphosphate. It functions in the pathway cofactor biosynthesis; ubiquinone biosynthesis. In terms of biological role, catalyzes the prenylation of para-hydroxybenzoate (PHB) with an all-trans polyprenyl group. Mediates the second step in the final reaction sequence of ubiquinone-8 (UQ-8) biosynthesis, which is the condensation of the polyisoprenoid side chain with PHB, generating the first membrane-bound Q intermediate 3-octaprenyl-4-hydroxybenzoate. The chain is 4-hydroxybenzoate octaprenyltransferase from Shewanella baltica (strain OS185).